The chain runs to 147 residues: D-aminoacyl-tRNA deacylase (147 aa).

Residues 136-137 (GP) carry the Gly-cisPro motif, important for rejection of L-amino acids motif.

Belongs to the DTD family. As to quaternary structure, homodimer.

It is found in the cytoplasm. It catalyses the reaction glycyl-tRNA(Ala) + H2O = tRNA(Ala) + glycine + H(+). It carries out the reaction a D-aminoacyl-tRNA + H2O = a tRNA + a D-alpha-amino acid + H(+). In terms of biological role, an aminoacyl-tRNA editing enzyme that deacylates mischarged D-aminoacyl-tRNAs. Also deacylates mischarged glycyl-tRNA(Ala), protecting cells against glycine mischarging by AlaRS. Acts via tRNA-based rather than protein-based catalysis; rejects L-amino acids rather than detecting D-amino acids in the active site. By recycling D-aminoacyl-tRNA to D-amino acids and free tRNA molecules, this enzyme counteracts the toxicity associated with the formation of D-aminoacyl-tRNA entities in vivo and helps enforce protein L-homochirality. The polypeptide is D-aminoacyl-tRNA deacylase (Streptococcus pneumoniae serotype 4 (strain ATCC BAA-334 / TIGR4)).